Reading from the N-terminus, the 242-residue chain is MSGRKPGTTGDTIVNLGLTAAILLCWLVLHAFTLWLLDAAAHPLLAVLCLAGLTWLSVGLFIIAHDAMHGSVVPGRPRANAAIGQLALWLYAGFSWPKLIAKHMTHHRHAGTDNDPDFGHGGPVRWYGSFVSTYFGWREGLLLPVIVTTYALILGDRWMYVIFWPVPAVLASIQIFVFGTWLPHRPGHDDFPDRHNARSTGIGDPLSLLTCFHFGGYHHEHHLHPHVPWWRLPRTRKTGGRA.

It carries out the reaction all-trans-beta-carotene + 2 AH2 + 2 O2 = echinenone + 2 A + 3 H2O. The catalysed reaction is echinenone + 2 AH2 + 2 O2 = canthaxanthin + 2 A + 3 H2O. Its pathway is carotenoid biosynthesis; astaxanthin biosynthesis. Converts beta-carotene to canthaxanthin via echinenone. This chain is Beta-carotene ketolase, found in Paracoccus sp. (strain PC1) (Alcaligenes sp. (strain PC1)).